A 491-amino-acid chain; its full sequence is UDP-N-acetylmuramate--L-alanine ligase (491 aa).

126 to 132 provides a ligand contact to ATP; the sequence is GTHGKTT.

Belongs to the MurCDEF family.

It is found in the cytoplasm. It carries out the reaction UDP-N-acetyl-alpha-D-muramate + L-alanine + ATP = UDP-N-acetyl-alpha-D-muramoyl-L-alanine + ADP + phosphate + H(+). It functions in the pathway cell wall biogenesis; peptidoglycan biosynthesis. Its function is as follows. Cell wall formation. This Enterobacter sp. (strain 638) protein is UDP-N-acetylmuramate--L-alanine ligase.